Consider the following 526-residue polypeptide: Ubiquitin carboxyl-terminal hydrolase 17-like protein A (526 aa).

Positions 1 to 21 (MVVALSFPEADPALSSPDAPE) are disordered. Residues 51–348 (CGLQNTGNSC…NAYVLFYVQQ (298 aa)) form the USP domain. C60 (nucleophile) is an active-site residue. The active-site Proton acceptor is H307. Residues 374–385 (KKSRRKKHKKKS) show a composition bias toward basic residues. 2 disordered regions span residues 374 to 394 (KKSRRKKHKKKSPFTEDLGEP) and 465 to 494 (RSTANWGRDSPDKENQPLHNADRLLTSQGP). Residues 473-486 (DSPDKENQPLHNAD) are compositionally biased toward basic and acidic residues.

The protein belongs to the peptidase C19 family. In terms of processing, polyubiquitinated; ubiquitination leads to its subsequent degradation. In terms of tissue distribution, expressed in hematopoietic progenitor cell lines Ba/F3 and FDCP1. Not detected in brain, lung, liver, kidney, thymus, spleen and bone marrow.

The catalysed reaction is Thiol-dependent hydrolysis of ester, thioester, amide, peptide and isopeptide bonds formed by the C-terminal Gly of ubiquitin (a 76-residue protein attached to proteins as an intracellular targeting signal).. In terms of biological role, deubiquitinating enzyme that removes conjugated ubiquitin from specific proteins to regulate different cellular processes. Has deubiquitinating enzyme activity for DNAH5, suggesting a role in the regulation of DNAH5 degradation by the ubiquitin-proteasome pathway. Has growth-suppressing activity; induces arrest in G1 phase upon controlled expression. The sequence is that of Ubiquitin carboxyl-terminal hydrolase 17-like protein A (Usp17la) from Mus musculus (Mouse).